We begin with the raw amino-acid sequence, 324 residues long: Olfactory receptor 2T2 (324 aa).

Residues 1–26 (MGMEGLLQNSTNFVLTGLITHPAFPG) are Extracellular-facing. Asn-9 carries N-linked (GlcNAc...) asparagine glycosylation. Residues 27–50 (LLFAIVFSIFVVAITANLVMILLI) traverse the membrane as a helical segment. At 51-58 (HMDSRLHT) the chain is on the cytoplasmic side. A helical membrane pass occupies residues 59–80 (PMYFLLSQLSIMDTIYICITVP). At 81-101 (KMLQDLLSKDKTISFLGCAVQ) the chain is on the extracellular side. Cys-98 and Cys-190 are oxidised to a cystine. A helical membrane pass occupies residues 102-121 (IFLYLTLIGGEFFLLGLMAY). Topologically, residues 122 to 140 (DRYVAVCNPLRYPLLMNRR) are cytoplasmic. A helical transmembrane segment spans residues 141–159 (VCLFMVVGSWVGGSLDGFM). The Extracellular segment spans residues 160-196 (LTPVTMSFPFCRSREINHFFCEIPAVLKLSCTDTSLY). A helical membrane pass occupies residues 197–220 (ETLMYACCVLMLLIPLSVISVSYT). Topologically, residues 221-237 (HILLTVHRMNSAEGRRK) are cytoplasmic. The helical transmembrane segment at 238-260 (AFATCSSHIMVVSVFYGAAFYTN) threads the bilayer. The Extracellular portion of the chain corresponds to 261–273 (VLPHSYHTPEKDK). The chain crosses the membrane as a helical span at residues 274–293 (VVSAFYTILTPMLNPLIYSL). The Cytoplasmic segment spans residues 294-324 (RNKDVAAALRKVLGRCGSSQSIRVATVIRKG).

Belongs to the G-protein coupled receptor 1 family.

The protein localises to the cell membrane. Odorant receptor. This Homo sapiens (Human) protein is Olfactory receptor 2T2 (OR2T2).